Reading from the N-terminus, the 335-residue chain is Transmembrane protein 120B-A (335 aa).

A coiled-coil region spans residues 1 to 40; it reads MSLQKCQEEWSEIEKEFQQLQETHKVYKQKLEELNSLQNL. The next 6 membrane-spanning stretches (helical) occupy residues 100-122, 130-150, 157-177, 193-213, 268-288, and 300-320; these read GLYL…AKFA, FKLY…FVLN, VFNF…SILI, VSTF…YQIF, FLLP…ITLF, and QVFV…LTTL.

The protein belongs to the TMEM120 family.

The protein localises to the nucleus inner membrane. In terms of biological role, necessary for efficient adipogenesis. Does not show ion channel activity. The polypeptide is Transmembrane protein 120B-A (tmem120b-a) (Xenopus laevis (African clawed frog)).